Reading from the N-terminus, the 296-residue chain is Ribosomal RNA small subunit methyltransferase A (296 aa).

Residues Asn31, Leu33, Gly58, Glu79, Asp111, and Asn136 each coordinate S-adenosyl-L-methionine.

The protein belongs to the class I-like SAM-binding methyltransferase superfamily. rRNA adenine N(6)-methyltransferase family. RsmA subfamily.

The protein localises to the cytoplasm. It carries out the reaction adenosine(1518)/adenosine(1519) in 16S rRNA + 4 S-adenosyl-L-methionine = N(6)-dimethyladenosine(1518)/N(6)-dimethyladenosine(1519) in 16S rRNA + 4 S-adenosyl-L-homocysteine + 4 H(+). Its function is as follows. Specifically dimethylates two adjacent adenosines (A1518 and A1519) in the loop of a conserved hairpin near the 3'-end of 16S rRNA in the 30S particle. May play a critical role in biogenesis of 30S subunits. This is Ribosomal RNA small subunit methyltransferase A from Lactobacillus delbrueckii subsp. bulgaricus (strain ATCC BAA-365 / Lb-18).